The chain runs to 247 residues: Mycofactocin precursor peptide peptidase (247 aa).

5 residues coordinate a divalent metal cation: Glu-38, His-40, Asp-49, His-124, and Glu-163.

The protein belongs to the creatininase superfamily. In terms of assembly, homooctamer. Requires Fe(2+) as cofactor. It depends on Zn(2+) as a cofactor.

It catalyses the reaction [mycofactocin precursor peptide]-C-terminal glycyl-N-{5-[(4-hydroxyphenyl)methyl]-4,4-dimethyl-2-oxopyrrolidin-3-yl}acetamide + H2O = [mycofactocin precursor peptide]-C-terminal glycine + 3-amino-5-[(4-hydroxyphenyl)methyl]-4,4-dimethyl-2-pyrrolidin-2-one. Functionally, peptidase involved in the biosynthesis of the enzyme cofactor mycofactocin (MFT). Catalyzes cleavage of the MftC-modified MftA peptide to liberate its final two residues, which consist of a cross-linked valine-decarboxylated tyrosine dipeptide (named 3-amino-5-[(4-hydroxyphenyl)methyl]-4,4-dimethyl-2-pyrrolidin-2-one or ADHP). Is required for the in vivo ethanol assimilation in M.smegmatis. The polypeptide is Mycofactocin precursor peptide peptidase (Mycolicibacterium smegmatis (strain ATCC 700084 / mc(2)155) (Mycobacterium smegmatis)).